Consider the following 295-residue polypeptide: Pyridoxal 5'-phosphate synthase subunit PdxS (295 aa).

Asp25 serves as a coordination point for D-ribose 5-phosphate. Lys82 acts as the Schiff-base intermediate with D-ribose 5-phosphate in catalysis. D-ribose 5-phosphate is bound at residue Gly154. Arg166 lines the D-glyceraldehyde 3-phosphate pocket. Residues Gly215 and 236–237 contribute to the D-ribose 5-phosphate site; that span reads GS.

It belongs to the PdxS/SNZ family. As to quaternary structure, in the presence of PdxT, forms a dodecamer of heterodimers.

It carries out the reaction aldehydo-D-ribose 5-phosphate + D-glyceraldehyde 3-phosphate + L-glutamine = pyridoxal 5'-phosphate + L-glutamate + phosphate + 3 H2O + H(+). The protein operates within cofactor biosynthesis; pyridoxal 5'-phosphate biosynthesis. Functionally, catalyzes the formation of pyridoxal 5'-phosphate from ribose 5-phosphate (RBP), glyceraldehyde 3-phosphate (G3P) and ammonia. The ammonia is provided by the PdxT subunit. Can also use ribulose 5-phosphate and dihydroxyacetone phosphate as substrates, resulting from enzyme-catalyzed isomerization of RBP and G3P, respectively. The protein is Pyridoxal 5'-phosphate synthase subunit PdxS of Bacillus cereus (strain B4264).